The following is a 413-amino-acid chain: Alpha-1-antitrypsin 1-2 (413 aa).

Positions 1-24 (MTPSISWGLLLLAGLCCMVPSFLA) are cleaved as a signal peptide. N-linked (GlcNAc...) asparagine glycosylation is found at Asn64, Asn101, and Asn265. The interval 368–387 (AATVFEAVPMSMPPILRFDH) is RCL.

The protein belongs to the serpin family.

The protein localises to the secreted. In terms of biological role, inhibitor of serine proteases. Its primary target is elastase, but it also has a moderate affinity for plasmin and thrombin. The chain is Alpha-1-antitrypsin 1-2 (Serpina1b) from Mus musculus (Mouse).